The following is a 366-amino-acid chain: L-idonate 5-dehydrogenase (366 aa).

Zn(2+) contacts are provided by Cys56, His81, Cys111, Cys114, Cys117, Cys125, and Glu167.

Belongs to the zinc-containing alcohol dehydrogenase family. Zn(2+) serves as cofactor.

It catalyses the reaction L-idonate + NAD(+) = 5-dehydro-D-gluconate + NADH + H(+). It participates in carbohydrate acid metabolism; L-idonate degradation. In terms of biological role, involved in the catabolism of ascorbate to tartrate. The enzyme has no activity with NADP(+). The sequence is that of L-idonate 5-dehydrogenase from Vitis vinifera (Grape).